The sequence spans 240 residues: Methylthioribulose-1-phosphate dehydratase (240 aa).

Cys103 is a substrate binding site. Zn(2+) is bound by residues His121 and His123. The Proton donor/acceptor role is filled by Glu144. His200 contacts Zn(2+).

The protein belongs to the aldolase class II family. MtnB subfamily. Requires Zn(2+) as cofactor.

It localises to the cytoplasm. The enzyme catalyses 5-(methylsulfanyl)-D-ribulose 1-phosphate = 5-methylsulfanyl-2,3-dioxopentyl phosphate + H2O. The protein operates within amino-acid biosynthesis; L-methionine biosynthesis via salvage pathway; L-methionine from S-methyl-5-thio-alpha-D-ribose 1-phosphate: step 2/6. Catalyzes the dehydration of methylthioribulose-1-phosphate (MTRu-1-P) into 2,3-diketo-5-methylthiopentyl-1-phosphate (DK-MTP-1-P). The polypeptide is Methylthioribulose-1-phosphate dehydratase (Komagataella phaffii (strain GS115 / ATCC 20864) (Yeast)).